The sequence spans 326 residues: Protein FAM50 homolog (326 aa).

Positions 76–112 (EISNRDLQVARGASSSTSLAKDSQEAREKEEHVAKHT) are disordered. Residues 97–109 (DSQEAREKEEHVA) are compositionally biased toward basic and acidic residues.

It belongs to the FAM50 family.

This is Protein FAM50 homolog from Caenorhabditis briggsae.